The primary structure comprises 214 residues: Calcineurin B homologous protein 3 (214 aa).

Gly-2 carries N-myristoyl glycine lipidation. The 36-residue stretch at 110-145 (FRKEKLKFLFHMYDADYDGIITLQEYKNVLDELMSG) folds into the EF-hand domain. Residues Asp-123, Asp-125, Asp-127, and Glu-134 each contribute to the Ca(2+) site.

Belongs to the calcineurin regulatory subunit family. CHP subfamily. As to quaternary structure, monomer. Homodimer. Expressed in the bipotential gonad by E4.5 and expressed in both the testis and ovary by E5.5, but with expression higher in the testis. Expressed in the testis cords but also at low levels in the interstitium. In the ovary, expression is principally in the ovarian cortex, but also in the medulla. Also expressed in the embryonic brain, with expression highest in the region between the nasal placode and olfactory bulb. Also expressed in the embryonic heart and tail.

The protein localises to the nucleus. It is found in the cytoplasm. The protein resides in the membrane. It localises to the cell membrane. Its subcellular location is the cell projection. The protein localises to the lamellipodium. It is found in the ruffle membrane. Functionally, functions as an integral cofactor in cell pH regulation by controlling plasma membrane-type Na(+)/H(+) exchange activity. Promotes the induction of hematopoietic stem cell differentiation toward megakaryocytic lineage. Essential for the coupling of ERK cascade activation with the expression of ETS family genes in megakaryocytic differentiation. Also involved in granulocytic differentiation in a ERK-dependent manner. Inhibits the phosphatase activity of calcineurin. The polypeptide is Calcineurin B homologous protein 3 (Gallus gallus (Chicken)).